The primary structure comprises 213 residues: Ribonuclease T (213 aa).

The region spanning 28–202 (VVVDVETGGF…YDTEQTARLF (175 aa)) is the Exonuclease domain. Asp31, Glu33, His189, and Asp194 together coordinate Mg(2+). His189 functions as the Proton donor/acceptor in the catalytic mechanism.

The protein belongs to the RNase T family. As to quaternary structure, homodimer. Mg(2+) serves as cofactor.

Its function is as follows. Trims short 3' overhangs of a variety of RNA species, leaving a one or two nucleotide 3' overhang. Responsible for the end-turnover of tRNA: specifically removes the terminal AMP residue from uncharged tRNA (tRNA-C-C-A). Also appears to be involved in tRNA biosynthesis. This is Ribonuclease T from Xanthomonas euvesicatoria pv. vesicatoria (strain 85-10) (Xanthomonas campestris pv. vesicatoria).